The sequence spans 223 residues: UPF0441 protein YgiB (223 aa).

A compositionally biased stretch (low complexity) spans threonine 178–threonine 195. The disordered stretch occupies residues threonine 178–glycine 223. A compositionally biased stretch (polar residues) spans alanine 204–glycine 223.

This sequence belongs to the UPF0441 family.

This is UPF0441 protein YgiB from Shigella dysenteriae serotype 1 (strain Sd197).